The following is a 285-amino-acid chain: NAD kinase (285 aa).

The active-site Proton acceptor is aspartate 66. NAD(+) is bound by residues 66 to 67 (DG), 137 to 138 (ND), arginine 148, arginine 165, aspartate 167, and 178 to 183 (TAYSMS).

This sequence belongs to the NAD kinase family. Requires a divalent metal cation as cofactor.

It is found in the cytoplasm. It carries out the reaction NAD(+) + ATP = ADP + NADP(+) + H(+). Involved in the regulation of the intracellular balance of NAD and NADP, and is a key enzyme in the biosynthesis of NADP. Catalyzes specifically the phosphorylation on 2'-hydroxyl of the adenosine moiety of NAD to yield NADP. This is NAD kinase from Chlorobium luteolum (strain DSM 273 / BCRC 81028 / 2530) (Pelodictyon luteolum).